The primary structure comprises 759 residues: Secretin XpsD (759 aa).

Residues 1–21 form the signal peptide; sequence MSERMTPRLFPVSLLIGLLAG. C22 is lipidated: N-palmitoyl cysteine. A lipid anchor (S-diacylglycerol cysteine) is attached at C22. Positions 40–51 are enriched in low complexity; that stretch reads VGAAGATQTTAE. The disordered stretch occupies residues 40–69; it reads VGAAGATQTTAEQRADGNASAKPTPVIRRG. An N0 region spans residues 92–187; it reads GSATFNFEGE…APSTASPSAA (96 aa). The tract at residues 189 to 253 is N1; it reads GFEVRVVPLK…VQIFDVDWLS (65 aa). Residues 254 to 323 are N2; that stretch reads GMSVGVFPIQ…IQQWLDRIDS (70 aa). The interval 326-474 is N3; that stretch reads GGVRLFSYEL…SIRDVIEKLD (149 aa). Residues 352 to 434 are disordered; that stretch reads GGRGNGGNSG…PPSTNQNGSV (83 aa). The segment covering 392 to 401 has biased composition (gly residues); the sequence is ATGGDIGGTS. Residues 425–434 are compositionally biased toward polar residues; sequence PPSTNQNGSV. The secretin stretch occupies residues 479–734; that stretch reads QVHIEAQIAE…VLITPSIVRN (256 aa). The segment at 736–759 is s domain; sequence QDARDLTDEYGSKFKSMRPMDVHK.

Belongs to the bacterial secretin family. GSP D subfamily. Forms a cylindrical channel with 15 subunits. Binds to XpsN.

The protein resides in the cell outer membrane. Involved in a type II secretion system (T2SS, formerly general secretion pathway, GSP) for the export of proteins. This subunit forms the outer membrane channel. This is Secretin XpsD (xpsD) from Xanthomonas campestris pv. campestris (strain ATCC 33913 / DSM 3586 / NCPPB 528 / LMG 568 / P 25).